The primary structure comprises 366 residues: Flagellar P-ring protein (366 aa).

An N-terminal signal peptide occupies residues 1-27 (MKSKYSIFCMFLLRGFIFLGTVFSLNS).

Belongs to the FlgI family. The basal body constitutes a major portion of the flagellar organelle and consists of four rings (L,P,S, and M) mounted on a central rod.

It is found in the periplasm. It localises to the bacterial flagellum basal body. In terms of biological role, assembles around the rod to form the L-ring and probably protects the motor/basal body from shearing forces during rotation. In Leptospira interrogans serogroup Icterohaemorrhagiae serovar copenhageni (strain Fiocruz L1-130), this protein is Flagellar P-ring protein.